The sequence spans 907 residues: Protein MEI2-like 4 (907 aa).

Positions 28 to 58 are disordered; that stretch reads QFGFMKNNPMPEGGVDRSSNLPTSSWTSDSY. Positions 44 to 54 are enriched in polar residues; it reads RSSNLPTSSWT. RRM domains lie at 211-284 and 295-368; these read RILF…YSIP and GALW…PTCP. Residues 856-907 are disordered; it reads AGPNAGDQEPFPMGSNIRSRPGKHRTNSIENYTNFSSSSDNRDEPANGNDSM. The span at 883–894 shows a compositional bias: polar residues; sequence SIENYTNFSSSS.

Probable RNA-binding protein that plays a role in meiosis and vegetative growth. In Arabidopsis thaliana (Mouse-ear cress), this protein is Protein MEI2-like 4 (ML4).